The sequence spans 693 residues: Serine/threonine-protein kinase Pkn1 (693 aa).

The Protein kinase domain occupies 59–328 (FRLVRRLGRG…QVALAEHVRV (270 aa)). Residues 65–73 (LGRGGMGAV) and lysine 88 each bind ATP. Catalysis depends on aspartate 180, which acts as the Proton acceptor. Residues 393 to 491 (LVEVPVQVVL…LKAAVDALLQ (99 aa)) enclose the PilZ domain. A TPR repeat occupies 630-663 (ARSHFQSGGALERDGQLSQALDQYERGLKLAPLE).

The protein belongs to the protein kinase superfamily. Ser/Thr protein kinase family. In terms of processing, autophosphorylated.

It catalyses the reaction L-seryl-[protein] + ATP = O-phospho-L-seryl-[protein] + ADP + H(+). The catalysed reaction is L-threonyl-[protein] + ATP = O-phospho-L-threonyl-[protein] + ADP + H(+). Its activity is regulated as follows. May be regulated by calcium or a calmodulin-like protein. Functionally, plays an essential role in proper timing of early development events. This chain is Serine/threonine-protein kinase Pkn1 (pkn1), found in Myxococcus xanthus.